The primary structure comprises 480 residues: Adenosylhomocysteinase (480 aa).

Positions 63, 142, and 203 each coordinate substrate. Threonine 204–threonine 206 contributes to the NAD(+) binding site. Substrate-binding residues include lysine 233 and aspartate 237. NAD(+) contacts are provided by residues asparagine 238, glycine 267–glycine 272, glutamate 290, asparagine 325, isoleucine 346–histidine 348, and asparagine 394.

Belongs to the adenosylhomocysteinase family. It depends on NAD(+) as a cofactor.

It localises to the cytoplasm. It catalyses the reaction S-adenosyl-L-homocysteine + H2O = L-homocysteine + adenosine. It functions in the pathway amino-acid biosynthesis; L-homocysteine biosynthesis; L-homocysteine from S-adenosyl-L-homocysteine: step 1/1. May play a key role in the regulation of the intracellular concentration of adenosylhomocysteine. This chain is Adenosylhomocysteinase, found in Xylella fastidiosa (strain Temecula1 / ATCC 700964).